Consider the following 514-residue polypeptide: Lysine--tRNA ligase (514 aa).

2 residues coordinate Mg(2+): Glu422 and Glu429.

Belongs to the class-II aminoacyl-tRNA synthetase family. As to quaternary structure, homodimer. Mg(2+) is required as a cofactor.

It is found in the cytoplasm. The catalysed reaction is tRNA(Lys) + L-lysine + ATP = L-lysyl-tRNA(Lys) + AMP + diphosphate. This chain is Lysine--tRNA ligase, found in Psychrobacter arcticus (strain DSM 17307 / VKM B-2377 / 273-4).